A 306-amino-acid chain; its full sequence is Peroxisomal protein PEX21 (306 aa).

Cys-4 participates in a covalent cross-link: Glycyl cysteine thioester (Cys-Gly) (interchain with G-Cter in ubiquitin). The tract at residues 172–203 (ERQVQDDEKEQQQDKDDDFHLKETSPLDEDQR) is disordered.

It belongs to the peroxin-21 family. Interacts with PEX7. In terms of processing, monoubiquitinated at Cys-4; acts as a signal for PEX21 extraction and is required for proper export from peroxisomes and recycling.

It localises to the cytoplasm. It is found in the cytosol. The protein resides in the peroxisome. Mediates peroxisomal import of proteins containing a C-terminal PTS2-type peroxisomal targeting signal via its interaction with PEX7. Interaction with PEX7 only takes place when PEX7 is associated with cargo proteins containing a PTS2 peroxisomal targeting signal. PEX7 along with PTS2-containing cargo proteins are then translocated through the PEX13-PEX14 docking complex together with PEX21. The protein is Peroxisomal protein PEX21 (PEX21) of Kluyveromyces lactis (strain ATCC 8585 / CBS 2359 / DSM 70799 / NBRC 1267 / NRRL Y-1140 / WM37) (Yeast).